The following is a 91-amino-acid chain: Small ribosomal subunit protein uS19 (91 aa).

The protein belongs to the universal ribosomal protein uS19 family.

In terms of biological role, protein S19 forms a complex with S13 that binds strongly to the 16S ribosomal RNA. This Aliarcobacter butzleri (strain RM4018) (Arcobacter butzleri) protein is Small ribosomal subunit protein uS19.